The chain runs to 398 residues: Succinate--CoA ligase [ADP-forming] subunit beta (398 aa).

An ATP-grasp domain is found at 9–237 (RDLFETHGVP…AGGLDILELK (229 aa)). Residues Lys45, 52 to 54 (GRG), Ala94, and Glu99 each bind ATP. Asn191 and Asp205 together coordinate Mg(2+). Residues Asn257 and 319–321 (GIT) each bind substrate.

Belongs to the succinate/malate CoA ligase beta subunit family. As to quaternary structure, heterotetramer of two alpha and two beta subunits. Requires Mg(2+) as cofactor.

It catalyses the reaction succinate + ATP + CoA = succinyl-CoA + ADP + phosphate. The enzyme catalyses GTP + succinate + CoA = succinyl-CoA + GDP + phosphate. The protein operates within carbohydrate metabolism; tricarboxylic acid cycle; succinate from succinyl-CoA (ligase route): step 1/1. In terms of biological role, succinyl-CoA synthetase functions in the citric acid cycle (TCA), coupling the hydrolysis of succinyl-CoA to the synthesis of either ATP or GTP and thus represents the only step of substrate-level phosphorylation in the TCA. The beta subunit provides nucleotide specificity of the enzyme and binds the substrate succinate, while the binding sites for coenzyme A and phosphate are found in the alpha subunit. This Corynebacterium glutamicum (strain ATCC 13032 / DSM 20300 / JCM 1318 / BCRC 11384 / CCUG 27702 / LMG 3730 / NBRC 12168 / NCIMB 10025 / NRRL B-2784 / 534) protein is Succinate--CoA ligase [ADP-forming] subunit beta.